The primary structure comprises 310 residues: MDASSSPSPSEESLKLELDDLQKQLNKKLRFEASVCSIHNLLRDHYSSSSPSLRKQFYIVVSRVATVLKTRYTATGFWVAGLSLFEEAERLVSDASEKKHLKSCVAQAKEQLSEVDNQPTESSQGYLFEGHLTVDREPPQPQWLVQQNLMSAFASIVGGESSNGPTENTIGETANLMQELINGLDMIIPDILDDGGPPRAPPASKEVVEKLPVIIFTEELLKKFGAEAECCICKENLVIGDKMQELPCKHTFHPPCLKPWLDEHNSCPICRHELPTDDQKYENWKEREKEAEEERKGAENAVRGGEYMYV.

The segment at 230-271 adopts an RING-type; atypical zinc-finger fold; sequence CCICKENLVIGDKMQELPCKHTFHPPCLKPWLDEHNSCPICR. A coiled-coil region spans residues 276-306; sequence TDDQKYENWKEREKEAEEERKGAENAVRGGE. Residues 285–298 are compositionally biased toward basic and acidic residues; that stretch reads KEREKEAEEERKGA. Residues 285–310 are disordered; the sequence is KEREKEAEEERKGAENAVRGGEYMYV.

Interacts with ABI3 (via C-terminus). Post-translationally, auto-ubiquitinated. As to expression, highly expressed in leaves and at lower levels in flowers and seeds.

It is found in the nucleus. It localises to the cytoplasm. It carries out the reaction S-ubiquitinyl-[E2 ubiquitin-conjugating enzyme]-L-cysteine + [acceptor protein]-L-lysine = [E2 ubiquitin-conjugating enzyme]-L-cysteine + N(6)-ubiquitinyl-[acceptor protein]-L-lysine.. Its pathway is protein modification; protein ubiquitination. Its function is as follows. E3 ubiquitin-protein ligase that acts as a negative regulator of abscisic acid (ABA) signaling. Mediates ubiquitination and subsequent proteasomal degradation of the transcription factor ABI3. This chain is E3 ubiquitin-protein ligase AIP2 (AIP2), found in Arabidopsis thaliana (Mouse-ear cress).